Reading from the N-terminus, the 434-residue chain is Enolase (434 aa).

Gln-167 contributes to the (2R)-2-phosphoglycerate binding site. Glu-209 functions as the Proton donor in the catalytic mechanism. Mg(2+)-binding residues include Asp-246, Glu-291, and Asp-318. (2R)-2-phosphoglycerate-binding residues include Lys-343, Arg-372, Ser-373, and Lys-394. Residue Lys-343 is the Proton acceptor of the active site.

Belongs to the enolase family. As to quaternary structure, component of the RNA degradosome, a multiprotein complex involved in RNA processing and mRNA degradation. Requires Mg(2+) as cofactor.

It is found in the cytoplasm. It localises to the secreted. Its subcellular location is the cell surface. The catalysed reaction is (2R)-2-phosphoglycerate = phosphoenolpyruvate + H2O. The protein operates within carbohydrate degradation; glycolysis; pyruvate from D-glyceraldehyde 3-phosphate: step 4/5. Functionally, catalyzes the reversible conversion of 2-phosphoglycerate (2-PG) into phosphoenolpyruvate (PEP). It is essential for the degradation of carbohydrates via glycolysis. This chain is Enolase, found in Buchnera aphidicola subsp. Acyrthosiphon pisum (strain APS) (Acyrthosiphon pisum symbiotic bacterium).